The chain runs to 436 residues: MRISIFGLGYVGAVCAGCLSGRGHEVVGVDISAAKIDMINQGKSPIVEPGLGELLAEGVKTGRLRGTTNVTEAVLATELSMLCVGTPSKLNGDLELDYIEEVCRQMGSALRDKTERHTVVVRSTVLPGTVHNVVIPILEEFSGKKAGVDFGVAVNPEFLRESTAIKDYNFPPMTVIGELDKASGRRLASIYAELDAPIVRKGIAVAEMIKYTCNVWHATKVTFANEIGNIAKAAGVDGREVMEVVCMDNKLNLSQYYMRPGLAFGGSCLPKDVSALSYRAHLWDIEAPLISSLMRSNAAQVQKAYDMIDKHGSRKVALLGLSFKAGTDDLRESPQLELAEMLIGKGFKLSIFDSNVEYARDHGANGHYIKNEIPHVSALLQSDLDKVVAEADVIVLGNADPRFEKLAKDVPAGKKVIDLVGFMPQRTAGAAEGICW.

Residues Tyr10, Val11, Asp30, Lys35, Thr86, and Thr124 each coordinate NAD(+). The GDP-alpha-D-mannuronate site is built by Glu161, Lys210, Asn214, His217, Asn225, Tyr256, Tyr257, Arg259, and Gly265. Cys268 is a catalytic residue. Lys271 is an NAD(+) binding site. Lys324 provides a ligand contact to GDP-alpha-D-mannuronate. Arg331 contributes to the NAD(+) binding site.

This sequence belongs to the UDP-glucose/GDP-mannose dehydrogenase family.

The enzyme catalyses GDP-alpha-D-mannose + 2 NAD(+) + H2O = GDP-alpha-D-mannuronate + 2 NADH + 3 H(+). The protein operates within glycan biosynthesis; alginate biosynthesis. Its function is as follows. Catalyzes the oxidation of guanosine diphospho-D-mannose (GDP-D-mannose) to GDP-D-mannuronic acid, a precursor for alginate polymerization. The alginate layer causes a mucoid phenotype and is essential for cyst formation. The protein is GDP-mannose 6-dehydrogenase (algD) of Azotobacter vinelandii.